Reading from the N-terminus, the 450-residue chain is Glucose-6-phosphate isomerase (450 aa).

Thr-39 carries the post-translational modification Phosphothreonine. The active-site Proton donor is the Glu-291. Active-site residues include His-312 and Lys-426.

This sequence belongs to the GPI family.

It is found in the cytoplasm. It catalyses the reaction alpha-D-glucose 6-phosphate = beta-D-fructose 6-phosphate. Its pathway is carbohydrate biosynthesis; gluconeogenesis. The protein operates within carbohydrate degradation; glycolysis; D-glyceraldehyde 3-phosphate and glycerone phosphate from D-glucose: step 2/4. Functionally, catalyzes the reversible isomerization of glucose-6-phosphate to fructose-6-phosphate. The sequence is that of Glucose-6-phosphate isomerase from Bacillus cereus (strain AH187).